The following is a 333-amino-acid chain: Anthranilate phosphoribosyltransferase (333 aa).

5-phospho-alpha-D-ribose 1-diphosphate-binding positions include G81, 84-85 (GD), T89, 91-94 (NIST), 109-117 (KHGNRSVSS), and A121. G81 is a binding site for anthranilate. Mg(2+) is bound at residue S93. N112 lines the anthranilate pocket. Residue R167 coordinates anthranilate. Mg(2+)-binding residues include D225 and E226.

Belongs to the anthranilate phosphoribosyltransferase family. Homodimer. Mg(2+) serves as cofactor.

The enzyme catalyses N-(5-phospho-beta-D-ribosyl)anthranilate + diphosphate = 5-phospho-alpha-D-ribose 1-diphosphate + anthranilate. It functions in the pathway amino-acid biosynthesis; L-tryptophan biosynthesis; L-tryptophan from chorismate: step 2/5. Its function is as follows. Catalyzes the transfer of the phosphoribosyl group of 5-phosphorylribose-1-pyrophosphate (PRPP) to anthranilate to yield N-(5'-phosphoribosyl)-anthranilate (PRA). In Haemophilus influenzae (strain PittGG), this protein is Anthranilate phosphoribosyltransferase.